Here is a 693-residue protein sequence, read N- to C-terminus: Elongation factor G (693 aa).

Residues 8-282 (EKTRNIGIMA…AVIDYLPSPL (275 aa)) form the tr-type G domain. GTP contacts are provided by residues 17–24 (AHVDAGKT), 81–85 (DTPGH), and 135–138 (NKMD).

This sequence belongs to the TRAFAC class translation factor GTPase superfamily. Classic translation factor GTPase family. EF-G/EF-2 subfamily.

It localises to the cytoplasm. Functionally, catalyzes the GTP-dependent ribosomal translocation step during translation elongation. During this step, the ribosome changes from the pre-translocational (PRE) to the post-translocational (POST) state as the newly formed A-site-bound peptidyl-tRNA and P-site-bound deacylated tRNA move to the P and E sites, respectively. Catalyzes the coordinated movement of the two tRNA molecules, the mRNA and conformational changes in the ribosome. This is Elongation factor G from Streptococcus pneumoniae (strain CGSP14).